A 501-amino-acid polypeptide reads, in one-letter code: DNA nucleotidylexotransferase (501 aa).

A Nuclear localization signal motif is present at residues 11 to 17 (KKRKRPV). A BRCT domain is found at 24–121 (QVEVKFKEVT…RPVRVETRHS (98 aa)). The interval 249–253 (VGPKT) is involved in DNA binding. Residues 324–329 (GFRRGK) and 333–336 (HDVD) contribute to the a 2'-deoxyribonucleoside 5'-triphosphate site. Residues Asp334, Asp336, and Asp426 each coordinate Mg(2+). Residue 441 to 442 (GW) participates in a 2'-deoxyribonucleoside 5'-triphosphate binding.

Belongs to the DNA polymerase type-X family. The cofactor is Mg(2+).

It localises to the nucleus. It catalyses the reaction DNA(n) + a 2'-deoxyribonucleoside 5'-triphosphate = DNA(n+1) + diphosphate. In terms of biological role, template-independent DNA polymerase which catalyzes the random addition of deoxynucleoside 5'-triphosphate to the 3'-end of a DNA initiator. One of the in vivo functions of this enzyme is the addition of nucleotides at the junction (N region) of rearranged Ig heavy chain and T-cell receptor gene segments during the maturation of B- and T-cells. The chain is DNA nucleotidylexotransferase (dntt) from Oncorhynchus mykiss (Rainbow trout).